A 681-amino-acid chain; its full sequence is Transketolase 2 (681 aa).

His-30 contributes to the substrate binding site. Residues His-69 and 116 to 118 (GPL) contribute to the thiamine diphosphate site. Asp-157 contacts Mg(2+). 2 residues coordinate thiamine diphosphate: Gly-158 and Asn-187. Residues Asn-187 and Ile-189 each contribute to the Mg(2+) site. Substrate is bound by residues His-263, Arg-359, and Ser-386. His-263 lines the thiamine diphosphate pocket. Residues Glu-418 and Phe-445 each contribute to the thiamine diphosphate site. Glu-418 functions as the Proton donor in the catalytic mechanism. His-469, Asp-477, and Arg-528 together coordinate substrate.

This sequence belongs to the transketolase family. In terms of assembly, homodimer. Mg(2+) is required as a cofactor. Ca(2+) serves as cofactor. The cofactor is Mn(2+). Requires Co(2+) as cofactor. It depends on thiamine diphosphate as a cofactor.

It carries out the reaction D-sedoheptulose 7-phosphate + D-glyceraldehyde 3-phosphate = aldehydo-D-ribose 5-phosphate + D-xylulose 5-phosphate. Its function is as follows. Catalyzes the transfer of a two-carbon ketol group from a ketose donor to an aldose acceptor, via a covalent intermediate with the cofactor thiamine pyrophosphate. This Saccharomyces cerevisiae (strain ATCC 204508 / S288c) (Baker's yeast) protein is Transketolase 2 (TKL2).